Here is a 53-residue protein sequence, read N- to C-terminus: UPF0391 membrane protein msr4317 (53 aa).

2 consecutive transmembrane segments (helical) span residues 4-24 (WIIILLIVAAAASLLGMPALA) and 33-53 (ILIGIVLVIFLLVVLGIFAVT).

Belongs to the UPF0391 family.

Its subcellular location is the cell membrane. The chain is UPF0391 membrane protein msr4317 from Mesorhizobium japonicum (strain LMG 29417 / CECT 9101 / MAFF 303099) (Mesorhizobium loti (strain MAFF 303099)).